Reading from the N-terminus, the 217-residue chain is Probable transaldolase (217 aa).

The Schiff-base intermediate with substrate role is filled by Lys-83.

The protein belongs to the transaldolase family. Type 3B subfamily.

The protein resides in the cytoplasm. The catalysed reaction is D-sedoheptulose 7-phosphate + D-glyceraldehyde 3-phosphate = D-erythrose 4-phosphate + beta-D-fructose 6-phosphate. The protein operates within carbohydrate degradation; pentose phosphate pathway; D-glyceraldehyde 3-phosphate and beta-D-fructose 6-phosphate from D-ribose 5-phosphate and D-xylulose 5-phosphate (non-oxidative stage): step 2/3. Functionally, transaldolase is important for the balance of metabolites in the pentose-phosphate pathway. The chain is Probable transaldolase from Lactiplantibacillus plantarum (strain ATCC BAA-793 / NCIMB 8826 / WCFS1) (Lactobacillus plantarum).